Consider the following 355-residue polypeptide: UDP-N-acetylglucosamine--N-acetylmuramyl-(pentapeptide) pyrophosphoryl-undecaprenol N-acetylglucosamine transferase (355 aa).

UDP-N-acetyl-alpha-D-glucosamine is bound by residues 14–16 (TGG), Asn126, Arg162, Ser190, Ile243, 262–267 (ALTVSE), and Gln287.

The protein belongs to the glycosyltransferase 28 family. MurG subfamily.

It localises to the cell inner membrane. The enzyme catalyses di-trans,octa-cis-undecaprenyl diphospho-N-acetyl-alpha-D-muramoyl-L-alanyl-D-glutamyl-meso-2,6-diaminopimeloyl-D-alanyl-D-alanine + UDP-N-acetyl-alpha-D-glucosamine = di-trans,octa-cis-undecaprenyl diphospho-[N-acetyl-alpha-D-glucosaminyl-(1-&gt;4)]-N-acetyl-alpha-D-muramoyl-L-alanyl-D-glutamyl-meso-2,6-diaminopimeloyl-D-alanyl-D-alanine + UDP + H(+). Its pathway is cell wall biogenesis; peptidoglycan biosynthesis. Functionally, cell wall formation. Catalyzes the transfer of a GlcNAc subunit on undecaprenyl-pyrophosphoryl-MurNAc-pentapeptide (lipid intermediate I) to form undecaprenyl-pyrophosphoryl-MurNAc-(pentapeptide)GlcNAc (lipid intermediate II). The chain is UDP-N-acetylglucosamine--N-acetylmuramyl-(pentapeptide) pyrophosphoryl-undecaprenol N-acetylglucosamine transferase from Vibrio parahaemolyticus serotype O3:K6 (strain RIMD 2210633).